An 892-amino-acid chain; its full sequence is DNA mismatch repair protein MutS (892 aa).

607-614 contacts ATP; the sequence is GPNMSGKS.

The protein belongs to the DNA mismatch repair MutS family.

In terms of biological role, this protein is involved in the repair of mismatches in DNA. It is possible that it carries out the mismatch recognition step. This protein has a weak ATPase activity. The polypeptide is DNA mismatch repair protein MutS (Bacillus cereus (strain G9842)).